The chain runs to 387 residues: Alpha-sarcoglycan (387 aa).

Positions 1–23 are cleaved as a signal peptide; the sequence is MAATLTWILLFVGLLAGLRDTKA. Topologically, residues 24 to 290 are extracellular; it reads QQTTLYPLVG…ATGRDFLADA (267 aa). N-linked (GlcNAc...) asparagine glycans are attached at residues N174 and N246. A helical transmembrane segment spans residues 291–311; that stretch reads LVTLLVPLLVALLLTLLLAYI. The Cytoplasmic segment spans residues 312–387; that stretch reads MCCRREGQLK…AQVPLILDQH (76 aa). S377 is modified (phosphoserine).

This sequence belongs to the sarcoglycan alpha/epsilon family. Interacts with the syntrophin SNTA1. Cross-link to form 2 major subcomplexes: one consisting of SGCB, SGCD and SGCG and the other consisting of SGCB and SGCD. The association between SGCB and SGCG is particularly strong while SGCA is loosely associated with the other sarcoglycans. In terms of tissue distribution, strongly expressed in skeletal and heart muscle.

It localises to the cell membrane. Its subcellular location is the sarcolemma. The protein resides in the cytoplasm. The protein localises to the cytoskeleton. Its function is as follows. Component of the sarcoglycan complex, a subcomplex of the dystrophin-glycoprotein complex which forms a link between the F-actin cytoskeleton and the extracellular matrix. In Mesocricetus auratus (Golden hamster), this protein is Alpha-sarcoglycan (SGCA).